Consider the following 159-residue polypeptide: Phosphopantetheine adenylyltransferase (159 aa).

Residue threonine 9 participates in substrate binding. ATP-binding positions include 9-10 (TF) and histidine 17. The substrate site is built by lysine 41, leucine 73, and arginine 87. ATP is bound by residues 88-90 (GLR), glutamate 98, and 123-129 (YSFISST).

Belongs to the bacterial CoaD family. In terms of assembly, homohexamer. The cofactor is Mg(2+).

The protein resides in the cytoplasm. It carries out the reaction (R)-4'-phosphopantetheine + ATP + H(+) = 3'-dephospho-CoA + diphosphate. It functions in the pathway cofactor biosynthesis; coenzyme A biosynthesis; CoA from (R)-pantothenate: step 4/5. Reversibly transfers an adenylyl group from ATP to 4'-phosphopantetheine, yielding dephospho-CoA (dPCoA) and pyrophosphate. In Pseudomonas syringae pv. tomato (strain ATCC BAA-871 / DC3000), this protein is Phosphopantetheine adenylyltransferase.